We begin with the raw amino-acid sequence, 361 residues long: Uroporphyrinogen decarboxylase (361 aa).

Substrate contacts are provided by residues 27 to 31, aspartate 77, tyrosine 154, threonine 209, and histidine 327; that span reads RQAGR.

The protein belongs to the uroporphyrinogen decarboxylase family. As to quaternary structure, homodimer.

The protein resides in the cytoplasm. It catalyses the reaction uroporphyrinogen III + 4 H(+) = coproporphyrinogen III + 4 CO2. It participates in porphyrin-containing compound metabolism; protoporphyrin-IX biosynthesis; coproporphyrinogen-III from 5-aminolevulinate: step 4/4. Catalyzes the decarboxylation of four acetate groups of uroporphyrinogen-III to yield coproporphyrinogen-III. The protein is Uroporphyrinogen decarboxylase of Coxiella burnetii (strain Dugway 5J108-111).